A 537-amino-acid chain; its full sequence is Chaperonin GroEL (537 aa).

Residues threonine 29–proline 32, aspartate 86–threonine 90, glycine 413, and aspartate 492 each bind ATP.

The protein belongs to the chaperonin (HSP60) family. As to quaternary structure, forms a cylinder of 14 subunits composed of two heptameric rings stacked back-to-back. Interacts with the co-chaperonin GroES.

It is found in the cytoplasm. It carries out the reaction ATP + H2O + a folded polypeptide = ADP + phosphate + an unfolded polypeptide.. Together with its co-chaperonin GroES, plays an essential role in assisting protein folding. The GroEL-GroES system forms a nano-cage that allows encapsulation of the non-native substrate proteins and provides a physical environment optimized to promote and accelerate protein folding. The sequence is that of Chaperonin GroEL from Dehalococcoides mccartyi (strain ATCC BAA-2100 / JCM 16839 / KCTC 5957 / BAV1).